Here is a 331-residue protein sequence, read N- to C-terminus: Geranylgeranyl transferase type-2 subunit beta (331 aa).

G2 is modified (N-acetylglycine). T3 is subject to Phosphothreonine. PFTB repeat units follow at residues 20–61 (LEKH…DLMG), 68–109 (REEI…TLYD), 116–157 (VNKV…ALLG), 164–205 (VEKA…AITS), 212–253 (SDLL…KIIG), and 260–302 (REKL…SLLG). 190-192 (HAG) contributes to the geranylgeranyl diphosphate binding site. 2 residues coordinate Zn(2+): D238 and C240. 241–244 (YSWW) is a geranylgeranyl diphosphate binding site. A Zn(2+)-binding site is contributed by H290.

Belongs to the protein prenyltransferase subunit beta family. As to quaternary structure, heterotrimer composed of RABGGTA, RABGGTB and CHM; within this trimer, RABGGTA and RABGGTB form the catalytic component B, while CHM (component A) mediates peptide substrate binding. The Rab GGTase dimer (RGGT) interacts with CHM (component A) prior to Rab protein binding; the association is stabilized by geranylgeranyl pyrophosphate (GGpp). The CHM:RGGT:Rab complex is destabilized by GGpp. Interaction of RABGGTB with prenylated PTP4A2 precludes its association with RABGGTA and inhibits enzyme activity. Interacts with CHODL. Interacts with non-phosphorylated form of RAB8A; phosphorylation of RAB8A at 'Thr-72' disrupts this interaction. Zn(2+) is required as a cofactor.

The enzyme catalyses geranylgeranyl diphosphate + L-cysteinyl-[protein] = S-geranylgeranyl-L-cysteinyl-[protein] + diphosphate. Its activity is regulated as follows. The enzymatic reaction requires the aid of a Rab escort protein (also called component A). Catalyzes the transfer of a geranylgeranyl moiety from geranylgeranyl diphosphate to both cysteines of Rab proteins with the C-terminal sequence -XXCC, -XCXC and -CCXX, such as RAB1A, RAB3A, RAB5A and RAB7A. The polypeptide is Geranylgeranyl transferase type-2 subunit beta (RABGGTB) (Homo sapiens (Human)).